We begin with the raw amino-acid sequence, 146 residues long: 3-dehydroquinate dehydratase (146 aa).

Y24 (proton acceptor) is an active-site residue. Substrate contacts are provided by N75, H81, and D88. The active-site Proton donor is H101. Substrate-binding positions include 102 to 103 (LS) and R112.

This sequence belongs to the type-II 3-dehydroquinase family. As to quaternary structure, homododecamer.

It catalyses the reaction 3-dehydroquinate = 3-dehydroshikimate + H2O. It functions in the pathway metabolic intermediate biosynthesis; chorismate biosynthesis; chorismate from D-erythrose 4-phosphate and phosphoenolpyruvate: step 3/7. Its function is as follows. Catalyzes a trans-dehydration via an enolate intermediate. The sequence is that of 3-dehydroquinate dehydratase from Caulobacter vibrioides (strain ATCC 19089 / CIP 103742 / CB 15) (Caulobacter crescentus).